Reading from the N-terminus, the 239-residue chain is Pyridoxine 5'-phosphate synthase (239 aa).

Asparagine 7 is a binding site for 3-amino-2-oxopropyl phosphate. 1-deoxy-D-xylulose 5-phosphate is bound at residue 9 to 10; it reads DH. Arginine 18 lines the 3-amino-2-oxopropyl phosphate pocket. Residue histidine 43 is the Proton acceptor of the active site. Arginine 45 and histidine 50 together coordinate 1-deoxy-D-xylulose 5-phosphate. Residue glutamate 70 is the Proton acceptor of the active site. Threonine 100 lines the 1-deoxy-D-xylulose 5-phosphate pocket. The active-site Proton donor is the histidine 191. 3-amino-2-oxopropyl phosphate is bound by residues glycine 192 and 213 to 214; that span reads GH.

The protein belongs to the PNP synthase family. Homooctamer; tetramer of dimers.

The protein resides in the cytoplasm. The enzyme catalyses 3-amino-2-oxopropyl phosphate + 1-deoxy-D-xylulose 5-phosphate = pyridoxine 5'-phosphate + phosphate + 2 H2O + H(+). It participates in cofactor biosynthesis; pyridoxine 5'-phosphate biosynthesis; pyridoxine 5'-phosphate from D-erythrose 4-phosphate: step 5/5. Catalyzes the complicated ring closure reaction between the two acyclic compounds 1-deoxy-D-xylulose-5-phosphate (DXP) and 3-amino-2-oxopropyl phosphate (1-amino-acetone-3-phosphate or AAP) to form pyridoxine 5'-phosphate (PNP) and inorganic phosphate. The protein is Pyridoxine 5'-phosphate synthase of Synechococcus sp. (strain JA-2-3B'a(2-13)) (Cyanobacteria bacterium Yellowstone B-Prime).